We begin with the raw amino-acid sequence, 160 residues long: Endoribonuclease YbeY (160 aa).

Histidine 112, histidine 116, and histidine 122 together coordinate Zn(2+).

The protein belongs to the endoribonuclease YbeY family. Zn(2+) serves as cofactor.

It localises to the cytoplasm. Functionally, single strand-specific metallo-endoribonuclease involved in late-stage 70S ribosome quality control and in maturation of the 3' terminus of the 16S rRNA. The sequence is that of Endoribonuclease YbeY from Maricaulis maris (strain MCS10) (Caulobacter maris).